A 222-amino-acid chain; its full sequence is DNA mismatch repair protein MutH (222 aa).

Belongs to the MutH family.

Its subcellular location is the cytoplasm. Sequence-specific endonuclease that cleaves unmethylated GATC sequences. It is involved in DNA mismatch repair. This Pasteurella multocida (strain Pm70) protein is DNA mismatch repair protein MutH.